The chain runs to 104 residues: Secretoglobin family 3A member 1 (104 aa).

Residues 1–20 (MKLAALLGLCVALSCSSAAA) form the signal peptide.

The protein belongs to the secretoglobin family. UGRP subfamily. Homodimer; disulfide-linked. Highly expressed in lung and prostate. Also found in mammary gland, spleen, pancreas, testis and liver. Detected throughout the airway epithelium in lung, with highest expression in large airways. Found in lung submucosal glands where it localizes to acinar and ductile cells. Not detected in respiratory bronchioles, alveolar ducts or alveolar epithelium. In mammary gland, specifically localizes to luminal epithelial cells.

It localises to the secreted. Functionally, secreted cytokine-like protein. Inhibits cell growth in vitro. This Homo sapiens (Human) protein is Secretoglobin family 3A member 1 (SCGB3A1).